A 377-amino-acid chain; its full sequence is Probable aspartic-type endopeptidase CTSD (377 aa).

Positions 1–292 constitute a Peptidase A1 domain; the sequence is SLIDTGASRT…DFDKNRVGLA (292 aa). Asp-4 is a catalytic residue. The N-linked (GlcNAc...) asparagine glycan is linked to Asn-58. Asp-186 is a catalytic residue. The disordered stretch occupies residues 296–351; the sequence is YGETKDPPSSSHPPPAPTSNKASGGSPGLPEQSGTSSATTSTTGEPSSGSTASPSA. The segment covering 328-351 has biased composition (low complexity); sequence SGTSSATTSTTGEPSSGSTASPSA. Ser-350 carries GPI-anchor amidated serine lipidation. Residues 351-377 constitute a propeptide, removed in mature form; the sequence is AASSVSMSAWLSLAVFLSTASSLILWD.

It belongs to the peptidase A1 family.

It is found in the cell membrane. In terms of biological role, secreted aspartic-type endopeptidase which is secreted and contributes to virulence. This is Probable aspartic-type endopeptidase CTSD (CTSD) from Arthroderma otae (strain ATCC MYA-4605 / CBS 113480) (Microsporum canis).